The sequence spans 783 residues: ATP-dependent zinc metalloprotease FtsH (783 aa).

Low complexity predominate over residues M1–Q16. The segment at M1–L79 is disordered. Topologically, residues M1–R86 are cytoplasmic. Basic and acidic residues predominate over residues M35–R61. A helical transmembrane segment spans residues A87–M107. Residues N108 to V233 are Extracellular-facing. The chain crosses the membrane as a helical span at residues T234 to F254. The Cytoplasmic portion of the chain corresponds to S255–Q783. G325–T332 contacts ATP. H547 serves as a coordination point for Zn(2+). Residue E548 is part of the active site. Residues H551 and D623 each coordinate Zn(2+). The span at E738–V771 shows a compositional bias: low complexity. Residues E738 to Q783 are disordered. Positions P772–Q783 are enriched in pro residues.

It in the central section; belongs to the AAA ATPase family. This sequence in the C-terminal section; belongs to the peptidase M41 family. In terms of assembly, homohexamer. The cofactor is Zn(2+).

The protein localises to the cell membrane. Acts as a processive, ATP-dependent zinc metallopeptidase for both cytoplasmic and membrane proteins. Plays a role in the quality control of integral membrane proteins. In Slackia heliotrinireducens (strain ATCC 29202 / DSM 20476 / NCTC 11029 / RHS 1) (Peptococcus heliotrinreducens), this protein is ATP-dependent zinc metalloprotease FtsH.